Here is a 262-residue protein sequence, read N- to C-terminus: MPKATIVEKTPLFLKAVIEGAYPSLVNSIRRVIISELPVMAIDYVVIVSNTSVMYDEMLAHRLGLVPLTTPLQALPPIEDCETGLVDPSECTVRLMLQINAESDKIVYSGDLVSERPDVVPVYKDIPIVKLVKGQSIILEAYAKLGRAKEHAKWQAALASYYYYPRIKVLDEKCKEECKDICKELTNPFECTFNKAWTCRDICGDRLIVEWDRYKYVFWVESFGNYDVETALREAFRILKKKFSDFITTLTQKAGSLVETKV.

It belongs to the archaeal Rpo3/eukaryotic RPB3 RNA polymerase subunit family. In terms of assembly, part of the RNA polymerase complex.

The protein resides in the cytoplasm. It carries out the reaction RNA(n) + a ribonucleoside 5'-triphosphate = RNA(n+1) + diphosphate. Its function is as follows. DNA-dependent RNA polymerase (RNAP) catalyzes the transcription of DNA into RNA using the four ribonucleoside triphosphates as substrates. This chain is DNA-directed RNA polymerase subunit Rpo3, found in Pyrobaculum islandicum (strain DSM 4184 / JCM 9189 / GEO3).